Consider the following 557-residue polypeptide: Membrane protein insertase YidC (557 aa).

A helical membrane pass occupies residues 3–23; that stretch reads NLRPVLYLSMLLVLFLIWQAW. A disordered region spans residues 34-60; it reads APGAQEQVMDRDGVPAPPQDVPDAPVS. The next 4 helical transmembrane spans lie at 366 to 386, 436 to 456, 480 to 500, and 514 to 534; these read VVGNWGWAIIILTILIKLVFY, LGGCLPILVQIPVFIALYWVL, YFILPILMGVTMIAQYKLNPA, and PFVFTVFFAFFPAGLVLYWFV.

This sequence belongs to the OXA1/ALB3/YidC family. Type 1 subfamily. Interacts with the Sec translocase complex via SecD. Specifically interacts with transmembrane segments of nascent integral membrane proteins during membrane integration.

Its subcellular location is the cell inner membrane. Functionally, required for the insertion and/or proper folding and/or complex formation of integral membrane proteins into the membrane. Involved in integration of membrane proteins that insert both dependently and independently of the Sec translocase complex, as well as at least some lipoproteins. Aids folding of multispanning membrane proteins. This is Membrane protein insertase YidC from Thioalkalivibrio sulfidiphilus (strain HL-EbGR7).